Here is a 366-residue protein sequence, read N- to C-terminus: Peptide chain release factor 2 (366 aa).

Residue Gln-253 is modified to N5-methylglutamine.

Belongs to the prokaryotic/mitochondrial release factor family. Methylated by PrmC. Methylation increases the termination efficiency of RF2.

It localises to the cytoplasm. Peptide chain release factor 2 directs the termination of translation in response to the peptide chain termination codons UGA and UAA. This chain is Peptide chain release factor 2 (prfB), found in Buchnera aphidicola subsp. Baizongia pistaciae (strain Bp).